Consider the following 136-residue polypeptide: uncharacterized protein (136 aa).

The helical transmembrane segment at 14 to 34 (ASVFAFFVLFLFCLKIILVLF) threads the bilayer.

It localises to the membrane. This is an uncharacterized protein from Mycoplasma genitalium (strain ATCC 33530 / DSM 19775 / NCTC 10195 / G37) (Mycoplasmoides genitalium).